The primary structure comprises 102 residues: NADH-quinone oxidoreductase subunit K 1 (102 aa).

A run of 3 helical transmembrane segments spans residues 5 to 25 (LSHY…GIFL), 31 to 51 (IVIL…MVAF), and 65 to 85 (LFIL…LVVF).

This sequence belongs to the complex I subunit 4L family. NDH-1 is composed of 14 different subunits. Subunits NuoA, H, J, K, L, M, N constitute the membrane sector of the complex.

It localises to the cell inner membrane. It carries out the reaction a quinone + NADH + 5 H(+)(in) = a quinol + NAD(+) + 4 H(+)(out). In terms of biological role, NDH-1 shuttles electrons from NADH, via FMN and iron-sulfur (Fe-S) centers, to quinones in the respiratory chain. The immediate electron acceptor for the enzyme in this species is believed to be ubiquinone. Couples the redox reaction to proton translocation (for every two electrons transferred, four hydrogen ions are translocated across the cytoplasmic membrane), and thus conserves the redox energy in a proton gradient. The sequence is that of NADH-quinone oxidoreductase subunit K 1 from Rhizobium etli (strain ATCC 51251 / DSM 11541 / JCM 21823 / NBRC 15573 / CFN 42).